We begin with the raw amino-acid sequence, 127 residues long: Small ribosomal subunit protein bS6 (127 aa).

The segment at 101–127 (PMMKEEKARDLLQGAKADAPAEQPAAA) is disordered. A compositionally biased stretch (low complexity) spans 115 to 127 (AKADAPAEQPAAA).

Belongs to the bacterial ribosomal protein bS6 family.

Binds together with bS18 to 16S ribosomal RNA. The chain is Small ribosomal subunit protein bS6 from Thiobacillus denitrificans (strain ATCC 25259 / T1).